The chain runs to 701 residues: Polyphosphate kinase (701 aa).

N45 serves as a coordination point for ATP. Residues R373 and R403 each coordinate Mg(2+). The PLD phosphodiesterase 1 domain occupies 428–462 (PGMKIHAKLLLITRKEGDEFVRYAHIGTGNFHERT). Residue H433 is the Phosphohistidine intermediate of the active site. ATP contacts are provided by Y466, R562, and H590. The region spanning 585–615 (DRFLEHPRVLVVHNDGNPQVFISSADWMERN) is the PLD phosphodiesterase 2 domain.

It belongs to the polyphosphate kinase 1 (PPK1) family. Requires Mg(2+) as cofactor. In terms of processing, an intermediate of this reaction is the autophosphorylated ppk in which a phosphate is covalently linked to a histidine residue through a N-P bond.

It carries out the reaction [phosphate](n) + ATP = [phosphate](n+1) + ADP. Catalyzes the reversible transfer of the terminal phosphate of ATP to form a long-chain polyphosphate (polyP). The chain is Polyphosphate kinase from Vibrio cholerae serotype O1 (strain ATCC 39315 / El Tor Inaba N16961).